Reading from the N-terminus, the 306-residue chain is TnpB-like protein aq_aa05 (306 aa).

Zn(2+)-binding residues include C213, C216, C234, and C237.

This sequence belongs to the transposase 35 family.

This chain is TnpB-like protein aq_aa05, found in Aquifex aeolicus (strain VF5).